A 601-amino-acid polypeptide reads, in one-letter code: Secretogranin-2 (601 aa).

The first 30 residues, 1–30, serve as a signal peptide directing secretion; that stretch reads MSSQRNYCLAGCLSSCILVILMSFSDAASF. The disordered stretch occupies residues 89–109; it reads EQKDTQALSTDTAKSPTSDDE. The span at 93–104 shows a compositional bias: polar residues; sequence TQALSTDTAKSP. Position 151 is a sulfotyrosine (Tyr151). Positions 258 to 273 are enriched in basic and acidic residues; sequence VESQTQEELKESKEEV. The segment at 258–307 is disordered; sequence VESQTQEELKESKEEVEKTDDMEDEIKRSGLLGLQDEEPEKDTKEQESEN.

The protein belongs to the chromogranin/secretogranin protein family.

It localises to the secreted. Its function is as follows. Neuroendocrine protein of the granin family that regulates the biogenesis of secretory granules. The protein is Secretogranin-2 of Pelophylax ridibundus (Marsh frog).